A 505-amino-acid polypeptide reads, in one-letter code: Maturase K (505 aa).

Belongs to the intron maturase 2 family. MatK subfamily.

The protein resides in the plastid. The protein localises to the chloroplast. In terms of biological role, usually encoded in the trnK tRNA gene intron. Probably assists in splicing its own and other chloroplast group II introns. This Rhizophora stylosa (Bakau) protein is Maturase K.